A 391-amino-acid chain; its full sequence is F-box protein At2g34280 (391 aa).

Positions 1–43 (MDLLPYDVVEHILERLDVKSLLNCKSVSKQWRSTIRCRAFQER) constitute an F-box domain.

This is F-box protein At2g34280 from Arabidopsis thaliana (Mouse-ear cress).